The following is a 297-amino-acid chain: Thoeris protein ThsA (297 aa).

The next 2 helical transmembrane spans lie at 32 to 52 (ALSIILTIPTSVSTFISFLDL) and 57 to 77 (RLIILLILVGLSLVIIIVQFI).

It is found in the cell membrane. With respect to regulation, activated by a signal molecule generated by ThsB. Its function is as follows. Probable membrane protein component of the Thoeris antiviral defense system, composed of ThsA and ThsB. Expression of ThsA and ThsB in B.subtilis (strain BEST7003) confers resistance to phages SBSphiC, SBSphiJ and SPO1. Activation by a signal generated by ThsB leads to phage resistance. The protein is Thoeris protein ThsA of Bacillus amyloliquefaciens (strain Y2) (Bacillus amyloliquefaciens subsp. plantarum (strain B9601-Y2)).